The sequence spans 331 residues: MQRIRPYWIKFEQTGGAGMADGMSGINIPSILGCSVTIDNLLTRAEEGLDVSDVIEDLRIQAIPRFVCEAREVTGLKPRFLANSVVSLRVKPEHQETVLVVLNGDSSEVSCDRYYMECVTQPAFRGFIFSVLTAVEDRVYTVGVPPRLLIYRMTLFRPDNVLDFTLCVILMYLEGIGPSGASPSLFVQLSVYLRRVECQIGPLEKMRRFLYEGVLWLLNTLMYVVDNNPFTKTRVLPHYMFVKLLNPQPGTAPNIIKAIYSCGVGQRFDLPHGTPPCPDGVVQVPPGLLNGPLRDSEYQKSVYFWWLNRTMVTPKNVQLFETYKNSPRVVK.

The protein belongs to the herpesviridae cytoplasmic envelopment protein 1 family. As to quaternary structure, interacts with protein ORF7; this interaction localizes protein ORF53 to the host trans-Golgi network (TGN).

Its subcellular location is the virion. It localises to the virion tegument. The protein localises to the host cytoplasm. It is found in the host Golgi apparatus. In terms of biological role, plays a critical role in cytoplasmic virus egress. Participates in the final step of tegumentation and envelope acquisition within the host cytoplasm. In Varicella-zoster virus (strain Dumas) (HHV-3), this protein is Cytoplasmic envelopment protein 1 (ORF53).